The following is a 78-amino-acid chain: Acyl carrier protein (78 aa).

Residues 2 to 77 form the Carrier domain; sequence STIEERVKKI…AAIDYVKAHQ (76 aa). An O-(pantetheine 4'-phosphoryl)serine modification is found at S37.

This sequence belongs to the acyl carrier protein (ACP) family. 4'-phosphopantetheine is transferred from CoA to a specific serine of apo-ACP by AcpS. This modification is essential for activity because fatty acids are bound in thioester linkage to the sulfhydryl of the prosthetic group.

Its subcellular location is the cytoplasm. It participates in lipid metabolism; fatty acid biosynthesis. Its function is as follows. Carrier of the growing fatty acid chain in fatty acid biosynthesis. This Pseudomonas putida (strain ATCC 47054 / DSM 6125 / CFBP 8728 / NCIMB 11950 / KT2440) protein is Acyl carrier protein.